A 168-amino-acid chain; its full sequence is uncharacterized protein (168 aa).

The chain crosses the membrane as a helical span at residues 23–47; that stretch reads LFARASIIGVALLLSACATVPMASV.

It is found in the membrane. This is an uncharacterized protein from Haemophilus influenzae (strain ATCC 51907 / DSM 11121 / KW20 / Rd).